Consider the following 33-residue polypeptide: MDLEVIAQLTVLTLMVVSGPLVIVLSAIRKGNL.

A helical transmembrane segment spans residues 5–25; the sequence is VIAQLTVLTLMVVSGPLVIVL.

This sequence belongs to the Psb30/Ycf12 family. As to quaternary structure, PSII is composed of 1 copy each of membrane proteins PsbA, PsbB, PsbC, PsbD, PsbE, PsbF, PsbH, PsbI, PsbJ, PsbK, PsbL, PsbM, PsbT, PsbX, PsbY, PsbZ, Psb30/Ycf12, peripheral proteins of the oxygen-evolving complex and a large number of cofactors. It forms dimeric complexes.

It localises to the plastid. Its subcellular location is the chloroplast thylakoid membrane. A core subunit of photosystem II (PSII), probably helps stabilize the reaction center. This is Photosystem II reaction center protein Psb30 from Pinus koraiensis (Korean pine).